The primary structure comprises 196 residues: Probable nicotinate-nucleotide adenylyltransferase (196 aa).

Belongs to the NadD family.

It catalyses the reaction nicotinate beta-D-ribonucleotide + ATP + H(+) = deamido-NAD(+) + diphosphate. The protein operates within cofactor biosynthesis; NAD(+) biosynthesis; deamido-NAD(+) from nicotinate D-ribonucleotide: step 1/1. Catalyzes the reversible adenylation of nicotinate mononucleotide (NaMN) to nicotinic acid adenine dinucleotide (NaAD). The chain is Probable nicotinate-nucleotide adenylyltransferase from Caldicellulosiruptor saccharolyticus (strain ATCC 43494 / DSM 8903 / Tp8T 6331).